A 928-amino-acid chain; its full sequence is Type II inositol 3,4-bisphosphate 4-phosphatase (928 aa).

Over residues Met-1–Gln-13 the composition is skewed to basic and acidic residues. 3 disordered regions span residues Met-1 to Asp-23, Ile-481 to Asp-516, and Ser-548 to His-575. Residues Asp-23–Leu-165 enclose the C2 domain. 2 stretches are compositionally biased toward basic and acidic residues: residues Arg-506 to Asp-516 and Ser-548 to Asp-563.

Belongs to the inositol 3,4-bisphosphate 4-phosphatase family.

It catalyses the reaction a 1,2-diacyl-sn-glycero-3-phospho-(1D-myo-inositol-3,4-bisphosphate) + H2O = a 1,2-diacyl-sn-glycero-3-phospho-(1D-myo-inositol-3-phosphate) + phosphate. The catalysed reaction is 1D-myo-inositol 3,4-bisphosphate + H2O = 1D-myo-inositol 3-phosphate + phosphate. The enzyme catalyses 1D-myo-inositol 1,3,4-trisphosphate + H2O = 1D-myo-inositol 1,3-bisphosphate + phosphate. Its pathway is signal transduction; phosphatidylinositol signaling pathway. Strongly inhibited by inositol hexakisphosphate. Its function is as follows. Catalyzes the hydrolysis of the 4-position phosphate of phosphatidylinositol 3,4-bisphosphate, inositol 1,3,4-trisphosphate and inositol 3,4-bisphosphate. Plays a role in the late stages of macropinocytosis by dephosphorylating phosphatidylinositol 3,4-bisphosphate in membrane ruffles. The lipid phosphatase activity is critical for tumor suppressor function. Antagonizes the PI3K-AKT/PKB signaling pathway by dephosphorylating phosphoinositides and thereby modulating cell cycle progression and cell survival. The chain is Type II inositol 3,4-bisphosphate 4-phosphatase (Inpp4b) from Rattus norvegicus (Rat).